The sequence spans 64 residues: Conotoxin Cal6.26 (64 aa).

An N-terminal signal peptide occupies residues 1 to 22 (MKLTCVMIVAVLVLTVCKVVTS). Intrachain disulfides connect C32/C50, C40/C54, and C49/C60.

In terms of tissue distribution, expressed by the venom duct.

It is found in the secreted. In terms of biological role, probable neurotoxin. This Californiconus californicus (California cone) protein is Conotoxin Cal6.26.